The chain runs to 218 residues: Large ribosomal subunit protein uL3 (218 aa).

Belongs to the universal ribosomal protein uL3 family. As to quaternary structure, part of the 50S ribosomal subunit. Forms a cluster with proteins L14 and L19.

One of the primary rRNA binding proteins, it binds directly near the 3'-end of the 23S rRNA, where it nucleates assembly of the 50S subunit. The polypeptide is Large ribosomal subunit protein uL3 (Corynebacterium urealyticum (strain ATCC 43042 / DSM 7109)).